Consider the following 833-residue polypeptide: Leucine--tRNA ligase (833 aa).

A 'HIGH' region motif is present at residues 41–52; it reads PYPSGAGLHVGH. Positions 610–614 match the 'KMSKS' region motif; the sequence is KMSKS. K613 serves as a coordination point for ATP.

The protein belongs to the class-I aminoacyl-tRNA synthetase family.

The protein resides in the cytoplasm. The catalysed reaction is tRNA(Leu) + L-leucine + ATP = L-leucyl-tRNA(Leu) + AMP + diphosphate. This Streptococcus pyogenes serotype M28 (strain MGAS6180) protein is Leucine--tRNA ligase.